A 921-amino-acid polypeptide reads, in one-letter code: Sodium/calcium exchanger 2 (921 aa).

An N-terminal signal peptide occupies residues 1 to 20 (MAPLALVGVTLLLAAPPCSG). The Extracellular portion of the chain corresponds to 21 to 68 (AATPTPSLPPPPANDSDTSTGGCQGSYRCQPGVLLPVWEPDDPSLGDK). Residues 22–42 (ATPTPSLPPPPANDSDTSTGG) form a disordered region. N34 is a glycosylation site (N-linked (GlcNAc...) asparagine). The helical transmembrane segment at 69-90 (AARAVVYFVAMVYMFLGVSIIA) threads the bilayer. At 91–130 (DRFMAAIEVITSKEKEITITKANGETSVGTVRIWNETVSN) the chain is on the cytoplasmic side. Residues 131–152 (LTLMALGSSAPEILLSVIEVCG) form a helical membrane-spanning segment. An Alpha-1 repeat occupies 135 to 175 (ALGSSAPEILLSVIEVCGHNFQAGELGPGTIVGSAAFNMFV). Residues 153-164 (HNFQAGELGPGT) lie on the Extracellular side of the membrane. Residues 165–185 (IVGSAAFNMFVVIAVCIYVIP) form a helical membrane-spanning segment. The Cytoplasmic segment spans residues 186–196 (AGESRKIKHLR). The helical transmembrane segment at 197-219 (VFFVTASWSIFAYVWLYLILAVF) threads the bilayer. The Extracellular segment spans residues 220 to 222 (SPG). The chain crosses the membrane as a helical span at residues 223 to 246 (VVQVWEALLTLVFFPVCVVFAWMA). Residues 247–720 (DKRLLFYKYV…DGSREERLPS (474 aa)) are Cytoplasmic-facing. Residues 248–267 (KRLLFYKYVYKRYRTDPRSG) form a putative calmodulin-binding region region. Calx-beta domains are found at residues 384-483 (GAGE…VRLL) and 512-612 (ATVT…IELG). Residues E407, D443, D468, D469, I471, E473, E476, D518, D519, D520, E536, D598, E599, and E600 each coordinate Ca(2+). At S622 the chain carries Phosphoserine. Residue E665 coordinates Ca(2+). The chain crosses the membrane as a helical span at residues 721-740 (CFDYVMHFLTVFWKVLFACV). The Extracellular segment spans residues 741–747 (PPTEYCH). A helical membrane pass occupies residues 748–770 (GWACFGVSILVIGLLTALIGDLA). The Cytoplasmic portion of the chain corresponds to 771 to 772 (SH). The helical transmembrane segment at 773-791 (FGCTVGLKDSVNAVVFVAL) threads the bilayer. The stretch at 790 to 826 (ALGTSIPDTFASKVAALQDQCADASIGNVTGSNAVNV) is one Alpha-2 repeat. Residues 792 to 822 (GTSIPDTFASKVAALQDQCADASIGNVTGSN) lie on the Extracellular side of the membrane. N-linked (GlcNAc...) asparagine glycosylation is present at N817. A helical membrane pass occupies residues 823–843 (AVNVFLGLGVAWSVAAVYWAV). Residues 844-854 (QGRPFEVRTGT) are Cytoplasmic-facing. The helical transmembrane segment at 855–875 (LAFSVTLFTVFAFVGIAVLLY) threads the bilayer. The Extracellular portion of the chain corresponds to 876–892 (RRRPHIGGELGGPRGPK). Residues 893–909 (LATTALFLGLWLLYILF) traverse the membrane as a helical segment. The Cytoplasmic segment spans residues 910-921 (ASLEAYCHIRGF).

It belongs to the Ca(2+):cation antiporter (CaCA) (TC 2.A.19) family. SLC8 subfamily.

It is found in the cell membrane. It localises to the basolateral cell membrane. Its subcellular location is the perikaryon. The protein localises to the cell projection. The protein resides in the dendrite. It is found in the dendritic spine. It carries out the reaction Ca(2+)(in) + 3 Na(+)(out) = Ca(2+)(out) + 3 Na(+)(in). With respect to regulation, calcium transport is down-regulated by Na(+) and stimulated by Ca(2+). Functionally, mediates the electrogenic exchange of Ca(2+) against Na(+) ions across the cell membrane, and thereby contributes to the regulation of cytoplasmic Ca(2+) levels and Ca(2+)-dependent cellular processes. Contributes to cellular Ca(2+) homeostasis in excitable cells. Contributes to the rapid decrease of cytoplasmic Ca(2+) levels back to baseline after neuronal activation, and thereby contributes to modulate synaptic plasticity, learning and memory. Plays a role in regulating urinary Ca(2+) and Na(+) excretion. The polypeptide is Sodium/calcium exchanger 2 (SLC8A2) (Homo sapiens (Human)).